The primary structure comprises 426 residues: Enolase 1 (426 aa).

Glutamine 163 contacts (2R)-2-phosphoglycerate. Catalysis depends on glutamate 205, which acts as the Proton donor. 3 residues coordinate Mg(2+): aspartate 242, glutamate 283, and aspartate 310. Residues lysine 335, arginine 364, serine 365, and lysine 386 each coordinate (2R)-2-phosphoglycerate. The Proton acceptor role is filled by lysine 335.

This sequence belongs to the enolase family. Mg(2+) is required as a cofactor.

The protein localises to the cytoplasm. It is found in the secreted. The protein resides in the cell surface. The enzyme catalyses (2R)-2-phosphoglycerate = phosphoenolpyruvate + H2O. Its pathway is carbohydrate degradation; glycolysis; pyruvate from D-glyceraldehyde 3-phosphate: step 4/5. In terms of biological role, catalyzes the reversible conversion of 2-phosphoglycerate (2-PG) into phosphoenolpyruvate (PEP). It is essential for the degradation of carbohydrates via glycolysis. This Streptomyces coelicolor (strain ATCC BAA-471 / A3(2) / M145) protein is Enolase 1.